Consider the following 947-residue polypeptide: Bifunctional glutamine synthetase adenylyltransferase/adenylyl-removing enzyme (947 aa).

The segment at 1–440 is adenylyl removase; that stretch reads MTPLSSPLSQ…VFNELIGDDE (440 aa). The segment at 450 to 947 is adenylyl transferase; that stretch reads SEPWREVWQD…ASWRKWLVAV (498 aa).

The protein belongs to the GlnE family. Mg(2+) is required as a cofactor.

It carries out the reaction [glutamine synthetase]-O(4)-(5'-adenylyl)-L-tyrosine + phosphate = [glutamine synthetase]-L-tyrosine + ADP. It catalyses the reaction [glutamine synthetase]-L-tyrosine + ATP = [glutamine synthetase]-O(4)-(5'-adenylyl)-L-tyrosine + diphosphate. In terms of biological role, involved in the regulation of glutamine synthetase GlnA, a key enzyme in the process to assimilate ammonia. When cellular nitrogen levels are high, the C-terminal adenylyl transferase (AT) inactivates GlnA by covalent transfer of an adenylyl group from ATP to specific tyrosine residue of GlnA, thus reducing its activity. Conversely, when nitrogen levels are low, the N-terminal adenylyl removase (AR) activates GlnA by removing the adenylyl group by phosphorolysis, increasing its activity. The regulatory region of GlnE binds the signal transduction protein PII (GlnB) which indicates the nitrogen status of the cell. This Salmonella paratyphi C (strain RKS4594) protein is Bifunctional glutamine synthetase adenylyltransferase/adenylyl-removing enzyme.